A 286-amino-acid chain; its full sequence is Energy-coupling factor transporter ATP-binding protein EcfA2 (286 aa).

The region spanning 3-246 (IQFNQVSYIY…KTQLLKWHIE (244 aa)) is the ABC transporter domain. Residue 40–47 (GQTGSGKS) participates in ATP binding.

The protein belongs to the ABC transporter superfamily. Energy-coupling factor EcfA family. As to quaternary structure, forms a stable energy-coupling factor (ECF) transporter complex composed of 2 membrane-embedded substrate-binding proteins (S component), 2 ATP-binding proteins (A component) and 2 transmembrane proteins (T component).

It localises to the cell membrane. Functionally, ATP-binding (A) component of a common energy-coupling factor (ECF) ABC-transporter complex. Unlike classic ABC transporters this ECF transporter provides the energy necessary to transport a number of different substrates. The protein is Energy-coupling factor transporter ATP-binding protein EcfA2 of Staphylococcus epidermidis (strain ATCC 12228 / FDA PCI 1200).